Reading from the N-terminus, the 308-residue chain is Glucan 1,3-beta-glucosidase BGL2 (308 aa).

Positions 1–18 are cleaved as a signal peptide; sequence MQIKFLTTLATVLTSVAA. Glutamate 119 serves as the catalytic Proton donor. An N-linked (GlcNAc...) asparagine glycan is attached at asparagine 197. The active-site Nucleophile is the glutamate 228.

This sequence belongs to the glycosyl hydrolase 17 family.

Its subcellular location is the secreted. The protein resides in the cell wall. The protein localises to the cytoplasm. It catalyses the reaction Successive hydrolysis of beta-D-glucose units from the non-reducing ends of (1-&gt;3)-beta-D-glucans, releasing alpha-glucose.. In terms of biological role, cell wall glucan 1,3-beta-glucosidase involved in cell wall biosynthesis and virulence. Crucial for delivery of beta-1,3-glucan to the biofilm matrix and for accumulation of mature matrix biomass. Plays a role as a major antigen in human systemic candidiasis patients. This chain is Glucan 1,3-beta-glucosidase BGL2 (BGL2), found in Candida albicans (strain SC5314 / ATCC MYA-2876) (Yeast).